The sequence spans 329 residues: L-lactate dehydrogenase (329 aa).

NAD(+) is bound by residues Val-18, Glu-39, Lys-46, Tyr-71, and 85–86; that span reads GA. Positions 88 and 94 each coordinate substrate. NAD(+) contacts are provided by residues Ser-107, 124 to 126, and Ser-149; that span reads AAN. 126–129 contacts substrate; that stretch reads NPVD. 154-157 contributes to the substrate binding site; the sequence is DSAR. Residues Arg-159 and His-174 each contribute to the beta-D-fructose 1,6-bisphosphate site. Residue His-181 is the Proton acceptor of the active site. The residue at position 226 (Tyr-226) is a Phosphotyrosine. Substrate is bound at residue Thr-235.

The protein belongs to the LDH/MDH superfamily. LDH family. In terms of assembly, homotetramer.

The protein resides in the cytoplasm. It catalyses the reaction (S)-lactate + NAD(+) = pyruvate + NADH + H(+). It functions in the pathway fermentation; pyruvate fermentation to lactate; (S)-lactate from pyruvate: step 1/1. Its activity is regulated as follows. Allosterically activated by fructose 1,6-bisphosphate (FBP). Its function is as follows. Catalyzes the conversion of lactate to pyruvate. The polypeptide is L-lactate dehydrogenase (Streptococcus agalactiae serotype V (strain ATCC BAA-611 / 2603 V/R)).